We begin with the raw amino-acid sequence, 478 residues long: 3-isopropylmalate dehydratase large subunit (478 aa).

Residues cysteine 347, cysteine 407, and cysteine 410 each contribute to the [4Fe-4S] cluster site.

Belongs to the aconitase/IPM isomerase family. LeuC type 1 subfamily. In terms of assembly, heterodimer of LeuC and LeuD. [4Fe-4S] cluster serves as cofactor.

The catalysed reaction is (2R,3S)-3-isopropylmalate = (2S)-2-isopropylmalate. Its pathway is amino-acid biosynthesis; L-leucine biosynthesis; L-leucine from 3-methyl-2-oxobutanoate: step 2/4. Catalyzes the isomerization between 2-isopropylmalate and 3-isopropylmalate, via the formation of 2-isopropylmaleate. This is 3-isopropylmalate dehydratase large subunit from Prochlorococcus marinus (strain MIT 9313).